The following is an 82-amino-acid chain: Small ribosomal subunit protein bS20 (82 aa).

This sequence belongs to the bacterial ribosomal protein bS20 family.

In terms of biological role, binds directly to 16S ribosomal RNA. This is Small ribosomal subunit protein bS20 from Streptococcus suis (strain 98HAH33).